Consider the following 338-residue polypeptide: Protein pelota homolog (338 aa).

This sequence belongs to the eukaryotic release factor 1 family. Pelota subfamily. In terms of assembly, monomer. A divalent metal cation serves as cofactor.

The protein localises to the cytoplasm. May function in recognizing stalled ribosomes, interact with stem-loop structures in stalled mRNA molecules, and effect endonucleolytic cleavage of the mRNA. May play a role in the release non-functional ribosomes and degradation of damaged mRNAs. Has endoribonuclease activity. This is Protein pelota homolog from Caldivirga maquilingensis (strain ATCC 700844 / DSM 13496 / JCM 10307 / IC-167).